The primary structure comprises 156 residues: Endoribonuclease YbeY (156 aa).

Positions 122, 126, and 132 each coordinate Zn(2+).

The protein belongs to the endoribonuclease YbeY family. Zn(2+) is required as a cofactor.

It localises to the cytoplasm. Its function is as follows. Single strand-specific metallo-endoribonuclease involved in late-stage 70S ribosome quality control and in maturation of the 3' terminus of the 16S rRNA. This Geobacillus kaustophilus (strain HTA426) protein is Endoribonuclease YbeY.